The chain runs to 339 residues: Protein H339R (339 aa).

It belongs to the asfivirus H339R family. As to quaternary structure, interacts with NACA (alpha chain of nascent polypeptide-associated complex).

The protein localises to the host cytoplasm. It is found in the host nucleus. The protein resides in the virion. The chain is Protein H339R from Ornithodoros (relapsing fever ticks).